The following is a 270-amino-acid chain: NADPH-dependent 7-cyano-7-deazaguanine reductase (270 aa).

79 to 81 serves as a coordination point for substrate; sequence IES. An NADPH-binding site is contributed by 81-82; it reads SK. The Thioimide intermediate role is filled by Cys177. Catalysis depends on Asp184, which acts as the Proton donor. Position 216–217 (216–217) interacts with substrate; it reads HE. 245–246 is an NADPH binding site; that stretch reads RG.

Belongs to the GTP cyclohydrolase I family. QueF type 2 subfamily. As to quaternary structure, homodimer.

The protein localises to the cytoplasm. The enzyme catalyses 7-aminomethyl-7-carbaguanine + 2 NADP(+) = 7-cyano-7-deazaguanine + 2 NADPH + 3 H(+). It participates in tRNA modification; tRNA-queuosine biosynthesis. Its function is as follows. Catalyzes the NADPH-dependent reduction of 7-cyano-7-deazaguanine (preQ0) to 7-aminomethyl-7-deazaguanine (preQ1). This Acinetobacter baumannii (strain AB307-0294) protein is NADPH-dependent 7-cyano-7-deazaguanine reductase.